A 502-amino-acid chain; its full sequence is ATP synthase subunit alpha, chloroplastic (502 aa).

170 to 177 (GDRQTGKT) serves as a coordination point for ATP.

This sequence belongs to the ATPase alpha/beta chains family. In terms of assembly, F-type ATPases have 2 components, CF(1) - the catalytic core - and CF(0) - the membrane proton channel. CF(1) has five subunits: alpha(3), beta(3), gamma(1), delta(1), epsilon(1). CF(0) has four main subunits: a, b, b' and c.

Its subcellular location is the plastid. It localises to the chloroplast thylakoid membrane. It catalyses the reaction ATP + H2O + 4 H(+)(in) = ADP + phosphate + 5 H(+)(out). In terms of biological role, produces ATP from ADP in the presence of a proton gradient across the membrane. The alpha chain is a regulatory subunit. This chain is ATP synthase subunit alpha, chloroplastic, found in Rhodomonas salina (Cryptomonas salina).